The sequence spans 789 residues: DEAD-box ATP-dependent RNA helicase 28 (789 aa).

Residues 1–152 are disordered; that stretch reads MPSSFFFEDA…AEYKPEDATP (152 aa). A coiled-coil region spans residues 13-66; the sequence is DELELIRNQEDSSEEDVKEGEAEEHEAGEDEDGEEEYEEEDDDEEEEDEKRKRD. The span at 23-60 shows a compositional bias: acidic residues; sequence DSSEEDVKEGEAEEHEAGEDEDGEEEYEEEDDDEEEED. Positions 83–99 are enriched in basic and acidic residues; sequence GEEHARRHTTSIDEKIS. Residues 110–135 adopt a coiled-coil conformation; the sequence is SINEEEEEEEEEEDASDAETDKQEEY. Residues 112–127 show a composition bias toward acidic residues; that stretch reads NEEEEEEEEEEDASDA. The short motif at 167 to 195 is the Q motif element; the sequence is DTFMELNLSRPLLRACETLGYKKPTPIQA. Residues 198-372 form the Helicase ATP-binding domain; it reads IPLALTGRDL…KLSLNKPLRL (175 aa). 211-218 serves as a coordination point for ATP; it reads AITGSGKT. Positions 320 to 323 match the DEAD box motif; that stretch reads DEAD. Residues 402–546 form the Helicase C-terminal domain; sequence VLLSLCTRTF…SRVIPEQSIV (145 aa). Coiled coils occupy residues 563–591 and 628–677; these read ISAE…HRDE and SADR…EDEE. The segment at 611–789 is disordered; sequence AQAEKDSAGN…FKSKARYKRR (179 aa). Residues 628-637 are compositionally biased toward basic and acidic residues; it reads SADRAEDLKM. The segment covering 638-656 has biased composition (basic residues); the sequence is KEKRKREREKNLPRKKRRK. Residues 665-678 are compositionally biased toward acidic residues; it reads EDNEGEEEEEDEEG. 3 stretches are compositionally biased toward basic and acidic residues: residues 691–701, 718–734, and 743–761; these read KKQETDKKGLT, RAID…DKKQ, and PRGE…EKKQ. Residues 772-789 show a composition bias toward basic residues; sequence PRTKSKNSFKSKARYKRR.

This sequence belongs to the DEAD box helicase family. DDX27/DRS1 subfamily.

The enzyme catalyses ATP + H2O = ADP + phosphate + H(+). The chain is DEAD-box ATP-dependent RNA helicase 28 (RH28) from Arabidopsis thaliana (Mouse-ear cress).